Reading from the N-terminus, the 554-residue chain is Glucose-6-phosphate isomerase (554 aa).

Glu-359 acts as the Proton donor in catalysis. Catalysis depends on residues His-390 and Lys-518.

It belongs to the GPI family.

The protein localises to the cytoplasm. It carries out the reaction alpha-D-glucose 6-phosphate = beta-D-fructose 6-phosphate. The protein operates within carbohydrate biosynthesis; gluconeogenesis. Its pathway is carbohydrate degradation; glycolysis; D-glyceraldehyde 3-phosphate and glycerone phosphate from D-glucose: step 2/4. Catalyzes the reversible isomerization of glucose-6-phosphate to fructose-6-phosphate. The protein is Glucose-6-phosphate isomerase of Pseudomonas aeruginosa (strain LESB58).